Reading from the N-terminus, the 504-residue chain is MQQSTPYLSFRGIGKTFPGVKALTDISFDCYAGQVHALMGENGAGKSTLLKILSGNYAPTTGSVVINGQEMSFSDTTAALNAGVAIIYQELHLVPEMTVAENIYLGQLPHKGGIVNRSLLNYEAGLQLKHLGMDIDPDTPLKYLSIGQWQMVEIAKALARNAKIIAFDEPTSSLSAREIDNLFRVIRELRKEGRVILYVSHRMEEIFALSDAITVFKDGRYVKTFTDMQQVDHDALVQAMVGRDIGDIYGWQPRSYGEERLRLDAVKAPGVRTPISLAVRSGEIVGLFGLVGAGRSELMKGLFGGTQITAGQVYIDQQPIDIRKPSHAIAAGMMLCPEDRKAEGIIPVHSVRDNINISARRKHVLGGCVINNGWEENNADQHIRSLNIKTPGAEQLIMNLSGGNQQKAILGRWLSEEMKVILLDEPTRGIDVGAKHEIYNVIYALAAQGVAVLFASSDLPEVLGVADRIVVMREGEIAGELLHEQADERQALSLAMPKVSQAVA.

ABC transporter domains are found at residues 8–243 and 256–499; these read LSFR…MVGR and YGEE…MPKV. Residue 40–47 participates in ATP binding; it reads GENGAGKS.

Belongs to the ABC transporter superfamily. Arabinose importer (TC 3.A.1.2.2) family. As to quaternary structure, the complex is composed of two ATP-binding proteins (AraG), two transmembrane proteins (AraH) and a solute-binding protein (AraF).

It is found in the cell inner membrane. The catalysed reaction is L-arabinose(out) + ATP + H2O = L-arabinose(in) + ADP + phosphate + H(+). Its function is as follows. Part of the ABC transporter complex AraFGH involved in arabinose import. Responsible for energy coupling to the transport system. The sequence is that of Arabinose import ATP-binding protein AraG from Shigella boydii serotype 4 (strain Sb227).